A 706-amino-acid polypeptide reads, in one-letter code: Probable N(6)-adenosine-methyltransferase MT-A70-like (706 aa).

Disordered stretches follow at residues 64–114 and 223–261; these read RPFV…VAAA and TLPL…PDMW. Residues 103-114 are compositionally biased toward low complexity; it reads SPGSSPASVAAA. Over residues 227–236 the composition is skewed to pro residues; the sequence is LQPPPAPQMP. S-adenosyl-L-methionine contacts are provided by residues 479–480 and aspartate 497; that span reads DI. The segment at 567-580 is positively charged region required for RNA-binding; sequence RIIRTGRTGHWLNH. Residues lysine 614, 637 to 640, and 650 to 651 contribute to the S-adenosyl-L-methionine site; these read RMHN and NQ. The tract at residues 669 to 706 is disordered; it reads AYPDSEVQPPSPPRASAPIDGDQGTSQKPTVSDGERPA.

The protein belongs to the MT-A70-like family.

It localises to the nucleus. It catalyses the reaction an adenosine in mRNA + S-adenosyl-L-methionine = an N(6)-methyladenosine in mRNA + S-adenosyl-L-homocysteine + H(+). Functionally, probable N6-methyltransferase that methylates adenosine residues of some mRNAs. N6-methyladenosine (m6A), which is present at internal sites of some mRNAs, may play a role in the efficiency of mRNA splicing, transport or translation. The polypeptide is Probable N(6)-adenosine-methyltransferase MT-A70-like (Oryza sativa subsp. japonica (Rice)).